Here is a 126-residue protein sequence, read N- to C-terminus: Interleukin-18-binding protein (126 aa).

Residues 1 to 20 (MRILFLIAFMYGCVHPYVNA) form the signal peptide.

It belongs to the orthopoxvirus OPG022 family.

The protein resides in the secreted. In terms of biological role, soluble IL18-binding protein that may modulate the host antiviral response. This is Interleukin-18-binding protein (OPG022) from Bos taurus (Bovine).